The primary structure comprises 320 residues: Putative HTH-type transcriptional regulatory protein VNG_2112C (320 aa).

The 58-residue stretch at 132–189 folds into the HTH cro/C1-type domain; sequence LADRREDERLSLGQLASELGVSRRTVSKYEDGMNASIEVAMRLEDLFGGELTAPVDVM. A DNA-binding region (H-T-H motif) is located at residues 143-162; sequence LGQLASELGVSRRTVSKYED.

This Halobacterium salinarum (strain ATCC 700922 / JCM 11081 / NRC-1) (Halobacterium halobium) protein is Putative HTH-type transcriptional regulatory protein VNG_2112C.